The primary structure comprises 420 residues: Vasopressin V1a receptor (420 aa).

Positions 1–20 (MSFPRGSYDPAASNSSPWWP) are disordered. The Extracellular portion of the chain corresponds to 1-54 (MSFPRGSYDPAASNSSPWWPLSAEDANSSWEAAGHQKGSDPSGDVRNEELAKLE). N-linked (GlcNAc...) asparagine glycosylation occurs at asparagine 27. The helical transmembrane segment at 55 to 75 (IAVLAVIFVVAVLGNSSVLLA) threads the bilayer. Topologically, residues 76 to 92 (LHRTPRKTSRMHLFIRH) are cytoplasmic. Residues 93 to 113 (LSLADLAVAFFQVLPQLCWDI) traverse the membrane as a helical segment. Residues 114 to 125 (TYRFRGPDWLCR) are Extracellular-facing. Cysteine 124 and cysteine 205 are joined by a disulfide. A helical transmembrane segment spans residues 126–146 (VVKHLQVFAMFASAYMLVVMT). Over 147–168 (ADRYIAVCHPLKTLQQPTRRSR) the chain is Cytoplasmic. Residues 169-189 (LMIAASWVLSFLLSTPQYFIF) traverse the membrane as a helical segment. The Extracellular portion of the chain corresponds to 190-225 (SMIEIEVNNGTKTQDCWATFIQPWGTRAYVTWMTSG). N-linked (GlcNAc...) asparagine glycosylation occurs at asparagine 198. Residues 226-246 (VFVVPVVILGTCYGFICYHIW) traverse the membrane as a helical segment. The Cytoplasmic segment spans residues 247-294 (RNVRGKTASRQSKGSGEDVAPFHKGLLVTPCVSSVKTISRAKIRTVKM). The chain crosses the membrane as a helical span at residues 295–315 (TFVIVTAYILCWAPFFIVQMW). Over 316 to 331 (SVWDDNFIWTDSENPS) the chain is Extracellular. Residues 332–352 (ITITALLASLNSCCNPWIYMF) traverse the membrane as a helical segment. Residues 353–420 (FSGHLLQDCV…RSIRFIPVST (68 aa)) lie on the Cytoplasmic side of the membrane. Residues cysteine 367 and cysteine 368 are each lipidated (S-palmitoyl cysteine). Residues 379–411 (DSDNMSRRHTSYSNNRSPTNSTGTWKDSPKSSR) form a disordered region. Residues 389–403 (SYSNNRSPTNSTGTW) show a composition bias toward polar residues. A Phosphoserine modification is found at serine 406.

Belongs to the G-protein coupled receptor 1 family. Vasopressin/oxytocin receptor subfamily.

The protein resides in the cell membrane. Its function is as follows. Receptor for arginine vasopressin. The activity of this receptor is mediated by G proteins which activate a phosphatidyl-inositol-calcium second messenger system. Involved in social memory formation. In Microtus ochrogaster (Prairie vole), this protein is Vasopressin V1a receptor (Avpr1a).